The following is a 623-amino-acid chain: Chaperone protein HtpG (623 aa).

The tract at residues 1–341 (MEKREFKAES…SQDLSLNISR (341 aa)) is a; substrate-binding. The segment at 342-549 (EMLQHDRQLS…EGEVSIEMEK (208 aa)) is b. Residues 550–623 (ILSAMPNNQG…FTNDICKLMK (74 aa)) form a c region.

This sequence belongs to the heat shock protein 90 family. As to quaternary structure, homodimer.

It localises to the cytoplasm. In terms of biological role, molecular chaperone. Has ATPase activity. The protein is Chaperone protein HtpG of Clostridium perfringens (strain ATCC 13124 / DSM 756 / JCM 1290 / NCIMB 6125 / NCTC 8237 / Type A).